The sequence spans 371 residues: Putative RNA-binding protein Luc7-like 1 (371 aa).

Coiled-coil stretches lie at residues 87-177 (MDHL…RNSM) and 220-256 (QIRE…EERL). Basic and acidic residues predominate over residues 232-257 (VAEKQEKRNQDRLRRREEREREERLG). The segment at 232–371 (VAEKQEKRNQ…RSEEKEAGEI (140 aa)) is disordered. Basic residues predominate over residues 258-317 (RRSGSRTRDRRRSRSRDRRRRRSRSTSRERRKFSRSRSRDRYRRHRSRSRSHSRGHRRAS). Composition is skewed to basic and acidic residues over residues 318-351 (RDRS…DWRL) and 361-371 (RRSEEKEAGEI). Phosphoserine occurs at positions 336 and 363.

It belongs to the Luc7 family.

In terms of biological role, may bind to RNA via its Arg/Ser-rich domain. The chain is Putative RNA-binding protein Luc7-like 1 (Luc7l) from Mus musculus (Mouse).